Reading from the N-terminus, the 907-residue chain is Protein MEI2-like 4 (907 aa).

Positions 28–58 (QFGFMKNNPMPEGGVDRSSNLPTSSWTSDSY) are disordered. Residues 44–54 (RSSNLPTSSWT) show a composition bias toward polar residues. RRM domains lie at 211–284 (RILF…YSIP) and 295–368 (GALW…PTCP). Positions 856 to 907 (AGPNAGDQEPFPMGSNIRSRPGKHRTNSIENYTNFSSSSDNRDEPANGNDSM) are disordered. The segment covering 883–894 (SIENYTNFSSSS) has biased composition (polar residues).

Probable RNA-binding protein that plays a role in meiosis and vegetative growth. The sequence is that of Protein MEI2-like 4 (ML4) from Arabidopsis thaliana (Mouse-ear cress).